Consider the following 429-residue polypeptide: Enolase 1 (429 aa).

Q163 is a (2R)-2-phosphoglycerate binding site. E205 serves as the catalytic Proton donor. Mg(2+)-binding residues include D242, E287, and D314. Residues K339, R368, S369, and K390 each coordinate (2R)-2-phosphoglycerate. Catalysis depends on K339, which acts as the Proton acceptor.

This sequence belongs to the enolase family. Requires Mg(2+) as cofactor.

It localises to the cytoplasm. The protein resides in the secreted. It is found in the cell surface. The enzyme catalyses (2R)-2-phosphoglycerate = phosphoenolpyruvate + H2O. Its pathway is carbohydrate degradation; glycolysis; pyruvate from D-glyceraldehyde 3-phosphate: step 4/5. Catalyzes the reversible conversion of 2-phosphoglycerate (2-PG) into phosphoenolpyruvate (PEP). It is essential for the degradation of carbohydrates via glycolysis. The polypeptide is Enolase 1 (Cupriavidus metallidurans (strain ATCC 43123 / DSM 2839 / NBRC 102507 / CH34) (Ralstonia metallidurans)).